The following is a 498-amino-acid chain: MKKYIFMRVLRSLVSIFLVTTLTYTIIYTLVPRKLIFKQDPNYNKIATTADKRDNYENTVFERMGYIEYYDTKELQEKASSMDSSVTVEANATNKAIYEKYINQLGHGWTLGEFTESGQFYATREIPIFERVFHFYANLIDIDHTNKIQDPENPDLKRYLRFENDPAIGWSLVGSGTKHKYLLYFNSQFPFVHQNFVNLNLGDSYPTYANTPVLQVITQGQGQTKTAQVQFPTGKKTSSVNIYSRTYKSPSQADSREVASYGKDDPYTATESNYQYPSMIVSSAITGLIGLVLAYALAVPLGSAMARFKNTWIDSLSTGALTFLLALPTIALVYIVRLIGSSIALPDSFPILGAGDWRSYVLPAVILGLLGAPGTAIWIRRYMIDLQSQDFVRFARAKGLSEKEISNKHIFKNAMVPLVSGIPAAIIGVIGGATLTETVFAFPGMGKMLIDSVKASNNSMVVGLVFIFTCISIFSRLLGDIWMTIIDPRIKLTEKGGK.

6 helical membrane passes run 12-32 (SLVSIFLVTTLTYTIIYTLVP), 279-299 (MIVSSAITGLIGLVLAYALAV), 316-336 (LSTGALTFLLALPTIALVYIV), 359-379 (SYVLPAVILGLLGAPGTAIWI), 415-435 (MVPLVSGIPAAIIGVIGGATL), and 461-481 (VVGLVFIFTCISIFSRLLGDI). Residues 280-479 (IVSSAITGLI…CISIFSRLLG (200 aa)) enclose the ABC transmembrane type-1 domain.

This sequence belongs to the binding-protein-dependent transport system permease family. OppBC subfamily.

It is found in the cell membrane. In terms of biological role, part of the binding-protein-dependent transport system for oligopeptides; probably responsible for the translocation of the substrate across the membrane. This chain is Oligopeptide transport system permease protein AmiC (amiC), found in Streptococcus pneumoniae serotype 4 (strain ATCC BAA-334 / TIGR4).